Reading from the N-terminus, the 360-residue chain is Phosphoserine aminotransferase (360 aa).

L-glutamate is bound at residue arginine 41. The pyridoxal 5'-phosphate site is built by tryptophan 101, threonine 152, aspartate 172, and glutamine 195. Lysine 196 is subject to N6-(pyridoxal phosphate)lysine. A pyridoxal 5'-phosphate-binding site is contributed by 237–238; sequence NT.

This sequence belongs to the class-V pyridoxal-phosphate-dependent aminotransferase family. SerC subfamily. Homodimer. Pyridoxal 5'-phosphate serves as cofactor.

The protein resides in the cytoplasm. It catalyses the reaction O-phospho-L-serine + 2-oxoglutarate = 3-phosphooxypyruvate + L-glutamate. The enzyme catalyses 4-(phosphooxy)-L-threonine + 2-oxoglutarate = (R)-3-hydroxy-2-oxo-4-phosphooxybutanoate + L-glutamate. Its pathway is amino-acid biosynthesis; L-serine biosynthesis; L-serine from 3-phospho-D-glycerate: step 2/3. The protein operates within cofactor biosynthesis; pyridoxine 5'-phosphate biosynthesis; pyridoxine 5'-phosphate from D-erythrose 4-phosphate: step 3/5. Catalyzes the reversible conversion of 3-phosphohydroxypyruvate to phosphoserine and of 3-hydroxy-2-oxo-4-phosphonooxybutanoate to phosphohydroxythreonine. This Burkholderia cenocepacia (strain ATCC BAA-245 / DSM 16553 / LMG 16656 / NCTC 13227 / J2315 / CF5610) (Burkholderia cepacia (strain J2315)) protein is Phosphoserine aminotransferase.